Reading from the N-terminus, the 196-residue chain is ATP-dependent Clp protease proteolytic subunit (196 aa).

The active-site Nucleophile is Ser-101. His-126 is an active-site residue.

It belongs to the peptidase S14 family. As to quaternary structure, component of the chloroplastic Clp protease core complex.

The protein localises to the plastid. Its subcellular location is the chloroplast stroma. It carries out the reaction Hydrolysis of proteins to small peptides in the presence of ATP and magnesium. alpha-casein is the usual test substrate. In the absence of ATP, only oligopeptides shorter than five residues are hydrolyzed (such as succinyl-Leu-Tyr-|-NHMec, and Leu-Tyr-Leu-|-Tyr-Trp, in which cleavage of the -Tyr-|-Leu- and -Tyr-|-Trp bonds also occurs).. In terms of biological role, cleaves peptides in various proteins in a process that requires ATP hydrolysis. Has a chymotrypsin-like activity. Plays a major role in the degradation of misfolded proteins. The polypeptide is ATP-dependent Clp protease proteolytic subunit (Lobularia maritima (Sweet alyssum)).